A 207-amino-acid polypeptide reads, in one-letter code: Ras-related protein Rab-7a (207 aa).

Thr2 is subject to N-acetylthreonine. Residues Ser17, Gly18, Val19, Gly20, Lys21, Thr22, Ser23, Ser34, Asn35, Tyr37, and Thr40 each contribute to the GTP site. Residue Thr22 participates in Mg(2+) binding. Residues 28-41 carry the Switch 1 motif; that stretch reads YVNKKFSNQYKATI. The Mg(2+) site is built by Thr40 and Asp63. Position 66 (Gly66) interacts with GTP. The Switch 2 signature appears at 67–82; it reads QERFQSLGVAFYRGAD. Ser72 is modified (phosphoserine). GTP contacts are provided by Asn125, Lys126, Asp128, Ala156, and Lys157. Residues Lys191 and Lys194 each participate in a glycyl lysine isopeptide (Lys-Gly) (interchain with G-Cter in ubiquitin) cross-link. Residues Cys205 and Cys207 are each lipidated (S-geranylgeranyl cysteine). Cys207 is subject to Cysteine methyl ester.

The protein belongs to the small GTPase superfamily. Rab family. Interacts with NTRK1/TRKA. Interacts with RILP. Interacts with PSMA7. Interacts with RNF115. Interacts with FYCO1. Interacts with the PIK3C3/VPS34-PIK3R4 complex. The GTP-bound form interacts with OSBPL1A. The GTP-bound form interacts with RAC1. Interacts with CLN3. Interacts with CHM, the substrate-binding subunit of the Rab geranylgeranyltransferase complex. Interacts with C9orf72. Does not interact with HPS4 and the BLOC-3 complex (heterodimer of HPS1 and HPS4). Interacts with CLN5. Interacts with PLEKHM1 (via N- and C-terminus). Interacts with PRPH; the interaction is direct. Interacts with VPS13A. The GDP-bound form interacts with RIMOC1. Interacts with the MON1A-CCZ1B complex and this interaction is enhanced in the presence of RIMOC1. Interacts with VPS39 and VPS41. Forms a ternary complex with LAMP2 and RUFY4; the interaction with LAMP2 is mediated by RUFY4 (via RUN and coiled coil domains). Requires Mg(2+) as cofactor. In terms of processing, deubiquitination at Lys-191 and Lys-194 by USP32. Post-translationally, phosphorylated at Ser-72 by LRRK1; phosphorylation is dependent on protein kinase C (PKC) activation of LRRK1. Prenylated. Prenylation is required for association with cellular membranes.

It is found in the cytoplasmic vesicle. It localises to the phagosome membrane. Its subcellular location is the late endosome membrane. The protein localises to the lysosome membrane. The protein resides in the melanosome membrane. It is found in the autophagosome membrane. It localises to the lipid droplet. Its subcellular location is the endosome membrane. The protein localises to the mitochondrion membrane. The catalysed reaction is GTP + H2O = GDP + phosphate + H(+). Its activity is regulated as follows. Regulated by guanine nucleotide exchange factors (GEFs) which promote the exchange of bound GDP for free GTP. Regulated by GTPase activating proteins (GAPs) which increase the GTP hydrolysis activity. Inhibited by GDP dissociation inhibitors (GDIs). Its function is as follows. The small GTPases Rab are key regulators of intracellular membrane trafficking, from the formation of transport vesicles to their fusion with membranes. Rabs cycle between an inactive GDP-bound form and an active GTP-bound form that is able to recruit to membranes different sets of downstream effectors directly responsible for vesicle formation, movement, tethering and fusion. In its active state, RAB7A binds to a variety of effector proteins playing a key role in the regulation of endo-lysosomal trafficking. Governs early-to-late endosomal maturation, microtubule minus-end as well as plus-end directed endosomal migration and positioning, and endosome-lysosome transport through different protein-protein interaction cascades. Also plays a central role in growth-factor-mediated cell signaling, nutrient-transporter-mediated nutrient uptake, neurotrophin transport in the axons of neurons and lipid metabolism. Also involved in regulation of some specialized endosomal membrane trafficking, such as maturation of melanosomes, pathogen-induced phagosomes (or vacuoles) and autophagosomes. Plays a role in the maturation and acidification of phagosomes that engulf pathogens, such as S.aureus and Mycobacteria. Plays a role in the fusion of phagosomes with lysosomes. In concert with RAC1, plays a role in regulating the formation of RBs (ruffled borders) in osteoclasts. Controls the endosomal trafficking and neurite outgrowth signaling of NTRK1/TRKA. Regulates the endocytic trafficking of the EGF-EGFR complex by regulating its lysosomal degradation. Involved in the ADRB2-stimulated lipolysis through lipophagy, a cytosolic lipase-independent autophagic pathway. Required for the exosomal release of SDCBP, CD63 and syndecan. Required for vesicular trafficking and cell surface expression of ACE2. May play a role in PRPH neuronal intermediate filament assembly. The protein is Ras-related protein Rab-7a (RAB7A) of Pongo abelii (Sumatran orangutan).